The chain runs to 160 residues: MNPLAAIELDLAYLGPDPLGEDRWVELLSSWLAQLQAELPSPLKADAYSLGLQFCDDAAIAELNGQWRQQPKPTDVLSFAAQEDAPEPLEGLPIELGDIVISIPTAERQAPEHGHSLQQELLFLASHGLLHLLGWDHPDEASLAAMLSRQDALVQGAAAH.

Positions 127, 131, and 137 each coordinate Zn(2+).

This sequence belongs to the endoribonuclease YbeY family. It depends on Zn(2+) as a cofactor.

It localises to the cytoplasm. Its function is as follows. Single strand-specific metallo-endoribonuclease involved in late-stage 70S ribosome quality control and in maturation of the 3' terminus of the 16S rRNA. This chain is Endoribonuclease YbeY, found in Synechococcus sp. (strain RCC307).